Consider the following 927-residue polypeptide: Perchlorate reductase subunit alpha (927 aa).

The tat-type signal signal peptide spans 1–31 (MVQMTRRGFLLASGATLLGSSLSFRTLAAAA). Residues 53–116 (DKKTRGAHLI…CAHDYMYGPH (64 aa)) form the 4Fe-4S Mo/W bis-MGD-type domain. Residues His60, Cys64, Cys68, and Cys102 each contribute to the [4Fe-4S] cluster site. Asp198 provides a ligand contact to Mo-bis(molybdopterin guanine dinucleotide).

It belongs to the prokaryotic molybdopterin-containing oxidoreductase family. Heterotrimer of alpha, beta and gamma subunits. [4Fe-4S] cluster is required as a cofactor. Requires Mo-bis(molybdopterin guanine dinucleotide) as cofactor. In terms of processing, predicted to be exported by the Tat system. The position of the signal peptide cleavage has not been experimentally proven.

It localises to the periplasm. Its function is as follows. Component of the perchlorate reductase that catalyzes the reduction of perchlorate to chlorite and allows anaerobic growth on perchlorate as the sole electron acceptor. Is probably also able to reduce chlorate to chlorite. The alpha subunit is likely the catalytic subunit. This Dechloromonas aromatica (strain RCB) protein is Perchlorate reductase subunit alpha (pcrA).